Here is a 427-residue protein sequence, read N- to C-terminus: Glycophorin-binding protein-related antigen (427 aa).

8 GBP repeats span residues 109–149 (LTSA…DELE), 150–189 (TSAD…DEVE), 190–229 (SSAD…DELE), 230–269 (TSAD…EVET), 270–307 (SADP…SEVE), 308–347 (TSAD…DELE), 348–387 (TSAD…DELE), and 388–427 (TSAD…DESS).

The protein is Glycophorin-binding protein-related antigen (GBPH) of Plasmodium falciparum (isolate FCBR / Columbia).